Reading from the N-terminus, the 52-residue chain is Large ribosomal subunit protein bL33 (52 aa).

This sequence belongs to the bacterial ribosomal protein bL33 family.

This Chlamydia muridarum (strain MoPn / Nigg) protein is Large ribosomal subunit protein bL33 (rpmG).